Reading from the N-terminus, the 764-residue chain is MKAGALHCRCAKCFSLPVRKRVRKRASAVSLLSLPEELLVFVLQCLSAEDLLSVRAVHSHLCDIIDTNASIWARVSFKDRWPAPDTVWLFERAAEKGNFEAAVKLGIAYLYNEGPLLSEEGRADLCGRMASRYLSLSESLRSPQAEPFIWLFIRPPWSVSGSCCKAVVFDRLQAECQTSPGRKGTLLYCLARVLQLFDDEEKRDEAELMLKESSRCGSLQSSYLLWAISRASSTADPGRYLQCMRTLRDYAARGCWEAQLAFVKSCGSANPLGLEPRACSELVSQFFQTGPSALRYQPHLQGQDITTKRYILVDWLVEVTTTKDFSSQVLHVTISCVDRYLHLRSVPKAQLQLLGIACMVICTRFISKEILTIREAVWLTDNTYQYEDLVHMMGEVISVLDGKIRTPTVLDYGEVLLSLLPVERRTAHLFSYICELSLLCSPATVPGPARLASAILLLTRALHNYVPVWPVQLEENTGFSKQDLVSCALTLYIKCFGQDVPKDYRHVSLTGVKQRFEDDSYQQISKDTVMGFKELCHVLEVPEVEPQVEVSSTSGQITEMHTFLSSPTSSSKRRRADSMQAHRGAFVATPTAELSNQEETLLGDFLDWSLDTSCSGYEGDRESEGEKDGEISTMEVQMELPLDCADRQTHCCLLSSDDTSLCEEDEQEPPTGGSKPWTRHLSSSSTSSSSSSCGFCTDRHSSGYSSIQSFPSPTGSSALVSPQNPPGVPSQRIRRQVKRKNTAAHSAGEAEQEDDAANLAFLSF.

Positions R19–S27 match the Nuclear localization signal 1 motif. One can recognise an F-box domain in the interval A28–V75. A Cyclin N-terminal domain is found at T307–I404. Residues R309–L312 carry the D box 1 motif. The short motif at S570–R575 is the Nuclear localization signal 2 element. Residues R583–K738 form a PEST region. The interval C662 to D754 is disordered. The segment covering S682–S692 has biased composition (low complexity). Polar residues predominate over residues S702–P722. Residues R732–T742 are compositionally biased toward basic residues.

It belongs to the cyclin family. Cyclin AB subfamily. In terms of assembly, component of the SCF(CCNF) complex. As to expression, expressed in the brain.

The protein localises to the nucleus. It is found in the cytoplasm. The protein resides in the perinuclear region. Its subcellular location is the cytoskeleton. It localises to the microtubule organizing center. The protein localises to the centrosome. It is found in the centriole. In terms of biological role, substrate recognition component of a SCF (SKP1-CUL1-F-box protein) E3 ubiquitin-protein ligase complex which mediates the ubiquitination and subsequent proteasomal degradation of target proteins. The SCF(CCNF) E3 ubiquitin-protein ligase complex is an integral component of the ubiquitin proteasome system (UPS) and links proteasome degradation to the cell cycle. Mediates the substrate recognition and the proteasomal degradation of various target proteins during G2 phase involved in the regulation of cell cycle progression and in the maintenance of genome stability. May play a role in motor neuron development and axonal outgrowth. This Danio rerio (Zebrafish) protein is Cyclin-F (ccnf).